The primary structure comprises 491 residues: Glycylpeptide N-tetradecanoyltransferase (491 aa).

45–48 (HKFW) contributes to the tetradecanoyl-CoA binding site. The segment at 53-79 (VPQITGSGASAPMEEGPIDDPKTPADV) is disordered. Tetradecanoyl-CoA contacts are provided by residues 182 to 184 (LCV) and 190 to 194 (SKRLA). The Proton acceptor; via carboxylate role is filled by Leu491.

Belongs to the NMT family. Monomer.

The protein localises to the cytoplasm. It catalyses the reaction N-terminal glycyl-[protein] + tetradecanoyl-CoA = N-tetradecanoylglycyl-[protein] + CoA + H(+). In terms of biological role, adds a myristoyl group to the N-terminal glycine residue of certain cellular proteins. This is Glycylpeptide N-tetradecanoyltransferase from Cryptococcus neoformans (Filobasidiella neoformans).